Reading from the N-terminus, the 462-residue chain is Notoamide biosynthesis cluster protein O' (462 aa).

Helical transmembrane passes span 16–36 (IFNVSVVAVCAFIAPGLWAAM), 55–75 (AVIFCLQVVVCVFGSSLIAKI), and 79–99 (WAFALGMVGFPIYASSVYCNV). Asn-102 carries N-linked (GlcNAc...) asparagine glycosylation. Helical transmembrane passes span 104 to 124 (SWYIMLACVIDGICSGIFWLT), 143 to 163 (AYWLASRIMGQMIGGAVTLGV), 173 to 193 (ISVQTYLVFISIQAIGPFVAA), and 233 to 253 (ILLLLPMMFQSVFSEAFFSTY). N-linked (GlcNAc...) asparagine glycosylation occurs at Asn-254. 4 consecutive transmembrane segments (helical) span residues 265-285 (LSSLVASTCVIISNFLLGFFL), 297-317 (MAAFIIIYAFELSLYVYAMVV), 343-363 (VYILMLVGFNLMYDYLYWLIG), and 404-424 (AVAVNLSFFAACIVPSAFVIY). The tract at residues 443–462 (LQTSGEGSHDIMDANGKSDD) is disordered. Over residues 449–462 (GSHDIMDANGKSDD) the composition is skewed to basic and acidic residues.

Belongs to the unc-93 family.

It is found in the membrane. Its function is as follows. Part of the gene cluster that mediates the biosynthesis of notoamide, a fungal indole alkaloid that belongs to a family of natural products containing a characteristic bicyclo[2.2.2]diazaoctane core. The first step of notoamide biosynthesis involves coupling of L-proline and L-tryptophan by the bimodular NRPS notE', to produce cyclo-L-tryptophan-L-proline called brevianamide F. The reverse prenyltransferase notF' then acts as a deoxybrevianamide E synthase and converts brevianamide F to deoxybrevianamide E via reverse prenylation at C-2 of the indole ring leading to the bicyclo[2.2.2]diazaoctane core. Deoxybrevianamide E is further hydroxylated at C-6 of the indole ring, likely catalyzed by the cytochrome P450 monooxygenase notG', to yield 6-hydroxy-deoxybrevianamide E. 6-hydroxy-deoxybrevianamide E is a specific substrate of the prenyltransferase notC' for normal prenylation at C-7 to produce 6-hydroxy-7-prenyl-deoxybrevianamide, also called notoamide S. As the proposed pivotal branching point in notoamide biosynthesis, notoamide S can be diverted to notoamide E through an oxidative pyran ring closure putatively catalyzed by either notH' cytochrome P450 monooxygenase or the notD' FAD-linked oxidoreductase. This step would be followed by an indole 2,3-epoxidation-initiated pinacol-like rearrangement catalyzed by the notB' FAD-dependent monooxygenase leading to the formation of notoamide C and notoamide D. On the other hand notoamide S is converted to notoamide T by notH' (or notD'), a bifunctional oxidase that also functions as the intramolecular Diels-Alderase responsible for generation of (-)-notoamide T. To generate antipodal (+)-notoaminide T, notH (or notD) in Aspergillus strain MF297-2 is expected to catalyze a Diels-Alder reaction leading to the opposite stereochemistry. The remaining oxidoreductase notD' (or notH') likely catalyzes the oxidative pyran ring formation to yield (-)-stephacidin A. The FAD-dependent monooxygenase notI' is highly similar to notB' and is predicted to catalyze a similar conversion from (-)-stephacidin A to (+)-notoamide B via the 2,3-epoxidation of (-)-stephacidin A followed by a pinacol-type rearrangement. Finally, it remains unclear which enzyme could be responsible for the final hydroxylation steps leading to notoamide A and sclerotiamide. The function of notO' in the notoamide biosynthesis has not been determined yet. The sequence is that of Notoamide biosynthesis cluster protein O' from Aspergillus versicolor.